Reading from the N-terminus, the 690-residue chain is Potassium-transporting ATPase ATP-binding subunit (690 aa).

Helical transmembrane passes span 49–69 (SPVM…CFVP), 72–92 (AVPT…VLFA), 229–249 (VALD…VVTL), and 253–273 (ALFA…VTLI). Residue aspartate 317 is the 4-aspartylphosphate intermediate of the active site. ATP-binding positions include aspartate 354, glutamate 358, 385–392 (FSAETRLS), and lysine 403. Mg(2+)-binding residues include aspartate 526 and aspartate 530. 3 helical membrane passes run 596–616 (FAIL…LNVM), 624–644 (AILS…PLAL), and 662–682 (LLIY…AIDL).

The protein belongs to the cation transport ATPase (P-type) (TC 3.A.3) family. Type IA subfamily. In terms of assembly, the system is composed of three essential subunits: KdpA, KdpB and KdpC.

Its subcellular location is the cell inner membrane. It carries out the reaction K(+)(out) + ATP + H2O = K(+)(in) + ADP + phosphate + H(+). In terms of biological role, part of the high-affinity ATP-driven potassium transport (or Kdp) system, which catalyzes the hydrolysis of ATP coupled with the electrogenic transport of potassium into the cytoplasm. This subunit is responsible for energy coupling to the transport system and for the release of the potassium ions to the cytoplasm. This chain is Potassium-transporting ATPase ATP-binding subunit, found in Pseudomonas aeruginosa (strain ATCC 15692 / DSM 22644 / CIP 104116 / JCM 14847 / LMG 12228 / 1C / PRS 101 / PAO1).